The chain runs to 253 residues: Light-harvesting complex stress-related protein 1, chloroplastic (253 aa).

The N-terminal 39 residues, 1 to 39 (MAMMMRKAAAVPASSRRSVAVNSVSGKRTVSGKAGAPVP), are a transit peptide targeting the chloroplast. Residue tyrosine 45 coordinates chlorophyll b. Residues phenylalanine 60, glutamate 81, and histidine 84 each coordinate chlorophyll a. Residue arginine 86 coordinates chlorophyll b. A helical membrane pass occupies residues 87–107 (VAMLAALGFIVGEQLQDFPLF). Residue glutamine 124 coordinates chlorophyll a. A helical membrane pass occupies residues 131–151 (EPLLIAIGVAESYRVAVGWAT). 2 residues coordinate chlorophyll b: glutamate 141 and arginine 144. Positions 190, 191, 194, 196, and 208 each coordinate chlorophyll a. The chain crosses the membrane as a helical span at residues 197–217 (LAMIAIAAFVAQELVEQTEIF).

Belongs to the light-harvesting chlorophyll a/b-binding (LHC) protein family.

The protein resides in the plastid. The protein localises to the chloroplast thylakoid membrane. Functionally, required for non-photochemical quenching (NPQ), a mechanism that converts and dissipates the harmful excess absorbed light energy into heat and protect the photosynthetic apparatus from photo-oxidative damage. Is able to sense luminal acidification of the thylakoid membranes, which occurs along with elevated electron flow caused by excess light, and to induce a large, fast, and reversible pH-dependent quenching in LHCII-containing membranes. Mediates excitation energy transfer from light-harvesting complex II (LHCII) to photosystem I (PSI), rather than photosystem II (PSII), at low pH, which mimics the acidified lumen of the thylakoid membranes in high light-exposed chloroplasts. Activates PSI-dependent fluorescence quenching in addition to dissipating excitation energy in LHCII to avoid photooxidative stress under excess light. This chain is Light-harvesting complex stress-related protein 1, chloroplastic, found in Chlamydomonas reinhardtii (Chlamydomonas smithii).